The following is a 210-amino-acid chain: Uracil phosphoribosyltransferase (210 aa).

5-phospho-alpha-D-ribose 1-diphosphate-binding positions include arginine 80, arginine 105, and aspartate 132–serine 140. Uracil-binding positions include isoleucine 195 and glycine 200–alanine 202. Aspartate 201 serves as a coordination point for 5-phospho-alpha-D-ribose 1-diphosphate.

It belongs to the UPRTase family. Requires Mg(2+) as cofactor.

The catalysed reaction is UMP + diphosphate = 5-phospho-alpha-D-ribose 1-diphosphate + uracil. Its pathway is pyrimidine metabolism; UMP biosynthesis via salvage pathway; UMP from uracil: step 1/1. Its activity is regulated as follows. Allosterically activated by GTP. In terms of biological role, catalyzes the conversion of uracil and 5-phospho-alpha-D-ribose 1-diphosphate (PRPP) to UMP and diphosphate. This is Uracil phosphoribosyltransferase from Deinococcus radiodurans (strain ATCC 13939 / DSM 20539 / JCM 16871 / CCUG 27074 / LMG 4051 / NBRC 15346 / NCIMB 9279 / VKM B-1422 / R1).